The chain runs to 480 residues: O-acyltransferase ausP (480 aa).

Active-site proton acceptor residues include histidine 180 and aspartate 412.

The protein belongs to the plant acyltransferase family. Monomer.

Its pathway is secondary metabolite biosynthesis; terpenoid biosynthesis. Functionally, O-acyltransferase; part of the gene cluster that mediates the biosynthesis of calidodehydroaustin, a fungal meroterpenoid. The first step of the pathway is the synthesis of 3,5-dimethylorsellinic acid by the polyketide synthase ausA. 3,5-dimethylorsellinic acid is then prenylated by the polyprenyl transferase ausN. Further epoxidation by the FAD-dependent monooxygenase ausM and cyclization by the probable terpene cyclase ausL lead to the formation of protoaustinoid A. Protoaustinoid A is then oxidized to spiro-lactone preaustinoid A3 by the combined action of the FAD-binding monooxygenases ausB and ausC, and the dioxygenase ausE. Acid-catalyzed keto-rearrangement and ring contraction of the tetraketide portion of preaustinoid A3 by ausJ lead to the formation of preaustinoid A4. The aldo-keto reductase ausK, with the help of ausH, is involved in the next step by transforming preaustinoid A4 into isoaustinone which is in turn hydroxylated by the P450 monooxygenase ausI to form austinolide. The cytochrome P450 monooxygenase ausG modifies austinolide to austinol. Austinol is further acetylated to austin by the O-acetyltransferase ausP, which spontaneously changes to dehydroaustin. The cytochrome P450 monooxygenase ausR then converts dehydroaustin is into 7-dehydrodehydroaustin. The hydroxylation catalyzed by ausR permits the O-acetyltransferase ausQ to add an additional acetyl group to the molecule, leading to the formation of acetoxydehydroaustin. The short chain dehydrogenase ausT catalyzes the reduction of the double bond present between carbon atoms 1 and 2 to convert 7-dehydrodehydroaustin into 1,2-dihydro-7-hydroxydehydroaustin. AusQ catalyzes not only an acetylation reaction but also the addition of the PKS ausV diketide product to 1,2-dihydro-7-hydroxydehydroaustin, forming precalidodehydroaustin. Finally, the iron/alpha-ketoglutarate-dependent dioxygenase converts precalidodehydroaustin into calidodehydroaustin. In Aspergillus calidoustus, this protein is O-acyltransferase ausP.